A 511-amino-acid polypeptide reads, in one-letter code: MSDNEGSVPTEGIDYGDTMVVWPSTGRIPGGDVKPGGSSGLAPSMPPGWGDYSPQGIALVQSVLFPGIIRRIILDKELEEGDWSGWSVSVHSPWGNEKVSAARTVLENGLRGGLPEPSRPAAVSFARLEPASGNEQKIIRLMVTQQLEQVTDIPASQLPAAGNNVPVKYRLTDLMQNGTQYMAIIGGIPMTVPVVDAVPVPDRSRPGTNIKDVYSAPVSPNLPDLVLSVGQMNTPVRSNPEIQEDGVISETGNYVEAGYTMSSNNHDVIVRFPEGSGVSPLYISAVEILDSNSLSQRQEAENNAKDDFRVKKEQENDEKTVLTKTSEVIISVGDKVGEYLGDKYKALSREIAENINNFQGKTIRSYDDAMSSINKLMANPSLKINATDKEAIVNAWKAFNAEDMGNKFAALGKTFKAADYAIKANNIREKSIEGYQTGNWGPLMLEVESWVISGMASAVALSLFSLTLGSALIAFGLSATVVGFVGVVIAGAIGAFIDDKFVDELNHKIIK.

The TonB box motif lies at 17–24 (DTMVVWPS). Transmembrane regions (helical) follow at residues 455–475 (MASA…LIAF) and 477–497 (LSAT…GAFI).

It belongs to the channel forming colicin family.

It localises to the cell membrane. Functionally, this colicin is a channel-forming colicin. This class of transmembrane toxins depolarize the cytoplasmic membrane, leading to dissipation of cellular energy. In terms of biological role, colicins are polypeptide toxins produced by and active against E.coli and closely related bacteria. The polypeptide is Colicin-B (cba) (Escherichia coli).